The following is a 698-amino-acid chain: Serotransferrin (698 aa).

A signal peptide spans 1-19 (MRFAVGALLACAALGLCLA). 2 Transferrin-like domains span residues 25-347 (VKWC…NQRE) and 360-683 (VKWC…NIRK). Disulfide bonds link cysteine 28/cysteine 67 and cysteine 38/cysteine 58. Position 42 is a dimethylated arginine (arginine 42). Aspartate 82 and tyrosine 114 together coordinate Fe(3+). 8 disulfide bridges follow: cysteine 137/cysteine 213, cysteine 156/cysteine 350, cysteine 177/cysteine 193, cysteine 180/cysteine 196, cysteine 190/cysteine 198, cysteine 246/cysteine 260, cysteine 363/cysteine 395, and cysteine 373/cysteine 386. Residues threonine 139, arginine 143, alanine 145, and glycine 146 each coordinate hydrogencarbonate. Residue tyrosine 207 coordinates Fe(3+). Histidine 268 is a Fe(3+) binding site. Serine 388 is modified (phosphoserine). Positions 410 and 447 each coordinate Fe(3+). Cystine bridges form between cysteine 420-cysteine 693, cysteine 435-cysteine 656, cysteine 471-cysteine 542, cysteine 495-cysteine 684, cysteine 505-cysteine 519, cysteine 516-cysteine 525, cysteine 582-cysteine 596, and cysteine 634-cysteine 639. The hydrogencarbonate site is built by threonine 473, arginine 477, alanine 479, and glycine 480. Residue asparagine 512 is glycosylated (N-linked (GlcNAc...) asparagine). Tyrosine 536 is a binding site for Fe(3+). Histidine 604 is a binding site for Fe(3+). Phosphoserine is present on serine 685.

Belongs to the transferrin family. Monomer. Part of a complex composed of SLC40A1/ferroportin, TF/transferrin and HEPH/hephaestin that transfers iron from cells to transferrin. As to expression, expressed by the liver and secreted in plasma.

The protein resides in the secreted. Its function is as follows. Transferrins are iron binding transport proteins which can bind two Fe(3+) ions in association with the binding of an anion, usually bicarbonate. It is responsible for the transport of iron from sites of absorption and heme degradation to those of storage and utilization. Serum transferrin may also have a further role in stimulating cell proliferation. This is Serotransferrin (Tf) from Rattus norvegicus (Rat).